The primary structure comprises 228 residues: Lipoprotein-releasing system ATP-binding protein LolD (228 aa).

The ABC transporter domain occupies 6–228 (IKCINLNKSY…ENNQIFNYES (223 aa)). Position 42–49 (42–49 (GKSGSGKT)) interacts with ATP.

The protein belongs to the ABC transporter superfamily. Lipoprotein translocase (TC 3.A.1.125) family.

Its subcellular location is the cell inner membrane. Functionally, usually LolD forms an ABC transporter complex with LolC and LolE involved in the translocation of lipoprotein, in an ATP-dependent manner. However, LolE is certainly not functional as it is frameshifted. The polypeptide is Lipoprotein-releasing system ATP-binding protein LolD (Buchnera aphidicola subsp. Acyrthosiphon pisum (strain APS) (Acyrthosiphon pisum symbiotic bacterium)).